The following is a 653-amino-acid chain: DNA ligase (653 aa).

NAD(+)-binding positions include 32–36 and 80–81; these read NFEYD and SL. Lys104 (N6-AMP-lysine intermediate) is an active-site residue. NAD(+) contacts are provided by Arg125, Glu159, and Lys297. Zn(2+) contacts are provided by Cys386, Cys389, Cys406, and Cys411. The BRCT domain occupies 571-653; that stretch reads GGSEKLKGLT…EEFIQLLNEA (83 aa).

Belongs to the NAD-dependent DNA ligase family. LigA subfamily. The cofactor is Mg(2+). Mn(2+) is required as a cofactor.

It catalyses the reaction NAD(+) + (deoxyribonucleotide)n-3'-hydroxyl + 5'-phospho-(deoxyribonucleotide)m = (deoxyribonucleotide)n+m + AMP + beta-nicotinamide D-nucleotide.. Functionally, DNA ligase that catalyzes the formation of phosphodiester linkages between 5'-phosphoryl and 3'-hydroxyl groups in double-stranded DNA using NAD as a coenzyme and as the energy source for the reaction. It is essential for DNA replication and repair of damaged DNA. This is DNA ligase from Lachnoclostridium phytofermentans (strain ATCC 700394 / DSM 18823 / ISDg) (Clostridium phytofermentans).